The sequence spans 45 residues: VVLGPASDGRNAAANVKAPDLIALTVRNDCCHNAPCRNNHPGICG.

Residues 1–27 (VVLGPASDGRNAAANVKAPDLIALTVR) constitute a propeptide that is removed on maturation. Intrachain disulfides connect Cys-30-Cys-36 and Cys-31-Cys-44. A lacks the Ser-Xaa-Pro motif that is crucial for potent interaction with nAChR region spans residues 32 to 34 (HNA). Residue Cys-44 is modified to Cysteine amide.

The protein belongs to the conotoxin A superfamily. As to expression, expressed by the venom duct.

The protein localises to the secreted. Alpha-conotoxins act on postsynaptic membranes, they bind to the nicotinic acetylcholine receptors (nAChR) and thus inhibit them. Has possibly a distinct nAChR binding mode from other alpha-conotoxins, due to a different three residue motif (lacks the Ser-Xaa-Pro motif). The protein is Alpha-conotoxin-like Lp1.10 of Conus leopardus (Leopard cone).